The following is a 319-amino-acid chain: Protein sprouty homolog 1 (319 aa).

Residue Met1 is modified to N-acetylmethionine. Disordered regions lie at residues 54-78 and 100-160; these read TEGPSVVKRPAPRTAPRQEKHERTH and AVLP…QPKQ. Positions 69 to 78 are enriched in basic and acidic residues; it reads PRQEKHERTH. Low complexity predominate over residues 112–131; that stretch reads SRSTSTGSAASSGSNSSASS. An SPR domain is found at 183–295; that stretch reads QCGKCKCGEC…CYDWIHRPGC (113 aa).

It belongs to the sprouty family. Forms heterodimers with SPRY2. Interacts with TESK1. Interacts with CAV1 (via C-terminus).

It localises to the cytoplasm. Its subcellular location is the membrane. Functionally, inhibits fibroblast growth factor (FGF)-induced retinal lens fiber differentiation, probably by inhibiting FGF-mediated phosphorylation of ERK1/2. Inhibits TGFB-induced epithelial-to-mesenchymal transition in lens epithelial cells. The polypeptide is Protein sprouty homolog 1 (SPRY1) (Homo sapiens (Human)).